We begin with the raw amino-acid sequence, 238 residues long: 2,3,4,5-tetrahydropyridine-2,6-dicarboxylate N-acetyltransferase (238 aa).

This sequence belongs to the transferase hexapeptide repeat family. DapH subfamily.

The catalysed reaction is (S)-2,3,4,5-tetrahydrodipicolinate + acetyl-CoA + H2O = L-2-acetamido-6-oxoheptanedioate + CoA. Its pathway is amino-acid biosynthesis; L-lysine biosynthesis via DAP pathway; LL-2,6-diaminopimelate from (S)-tetrahydrodipicolinate (acetylase route): step 1/3. Its function is as follows. Catalyzes the transfer of an acetyl group from acetyl-CoA to tetrahydrodipicolinate. This chain is 2,3,4,5-tetrahydropyridine-2,6-dicarboxylate N-acetyltransferase, found in Pseudothermotoga lettingae (strain ATCC BAA-301 / DSM 14385 / NBRC 107922 / TMO) (Thermotoga lettingae).